The chain runs to 385 residues: Probable alpha-galactosidase (385 aa).

Residues 1–19 (MMKIAATLLATIALATVNA) form the signal peptide. 2 cysteine pairs are disulfide-bonded: cysteine 40/cysteine 72 and cysteine 119/cysteine 149. The active-site Nucleophile is the aspartate 147. 180–184 (DWGYE) is a binding site for substrate. The Proton donor role is filled by aspartate 202.

This sequence belongs to the glycosyl hydrolase 27 family.

The catalysed reaction is Hydrolysis of terminal, non-reducing alpha-D-galactose residues in alpha-D-galactosides, including galactose oligosaccharides, galactomannans and galactolipids.. The chain is Probable alpha-galactosidase (melA) from Dictyostelium discoideum (Social amoeba).